Here is a 129-residue protein sequence, read N- to C-terminus: D-ribose pyranase (129 aa).

Catalysis depends on H20, which acts as the Proton donor. Substrate is bound by residues D28, H96, and 118–120 (YAN).

This sequence belongs to the RbsD / FucU family. RbsD subfamily. As to quaternary structure, homodecamer.

It is found in the cytoplasm. It catalyses the reaction beta-D-ribopyranose = beta-D-ribofuranose. The protein operates within carbohydrate metabolism; D-ribose degradation; D-ribose 5-phosphate from beta-D-ribopyranose: step 1/2. Catalyzes the interconversion of beta-pyran and beta-furan forms of D-ribose. The protein is D-ribose pyranase of Streptomyces avermitilis (strain ATCC 31267 / DSM 46492 / JCM 5070 / NBRC 14893 / NCIMB 12804 / NRRL 8165 / MA-4680).